The primary structure comprises 925 residues: Bifunctional imidazolonepropionase/histidine ammonia-lyase (925 aa).

Positions 1–414 (MTKNSSTVFT…IKPHVRMEPF (414 aa)) are imidazolonepropionase. Fe(3+)-binding residues include histidine 73 and histidine 75. Zn(2+)-binding residues include histidine 73 and histidine 75. 3 residues coordinate 4-imidazolone-5-propanoate: arginine 82, tyrosine 145, and histidine 178. Tyrosine 145 is a binding site for N-formimidoyl-L-glutamate. Residue histidine 243 coordinates Fe(3+). Residue histidine 243 coordinates Zn(2+). Glutamine 246 provides a ligand contact to 4-imidazolone-5-propanoate. Aspartate 318 contacts Fe(3+). Aspartate 318 provides a ligand contact to Zn(2+). N-formimidoyl-L-glutamate-binding residues include asparagine 320 and glycine 322. A 4-imidazolone-5-propanoate-binding site is contributed by threonine 323. Positions 415–925 (MTIILKPGSV…SAGILPDLEA (511 aa)) are histidine ammonia-lyase. The segment at residues 556–558 (ASG) is a cross-link (5-imidazolinone (Ala-Gly)). Serine 557 carries the post-translational modification 2,3-didehydroalanine (Ser).

The protein in the N-terminal section; belongs to the metallo-dependent hydrolases superfamily. HutI family. It in the C-terminal section; belongs to the PAL/histidase family. It depends on Zn(2+) as a cofactor. Requires Fe(3+) as cofactor. Post-translationally, contains an active site 4-methylidene-imidazol-5-one (MIO), which is formed autocatalytically by cyclization and dehydration of residues Ala-Ser-Gly.

It is found in the cytoplasm. The catalysed reaction is 4-imidazolone-5-propanoate + H2O = N-formimidoyl-L-glutamate. The enzyme catalyses L-histidine = trans-urocanate + NH4(+). Its pathway is amino-acid degradation; L-histidine degradation into L-glutamate; N-formimidoyl-L-glutamate from L-histidine: step 1/3. It functions in the pathway amino-acid degradation; L-histidine degradation into L-glutamate; N-formimidoyl-L-glutamate from L-histidine: step 3/3. In terms of biological role, catalyzes the hydrolytic cleavage of the carbon-nitrogen bond in imidazolone-5-propanoate to yield N-formimidoyl-L-glutamate. It is the third step in the universal histidine degradation pathway. The polypeptide is Bifunctional imidazolonepropionase/histidine ammonia-lyase (hutIH) (Brucella melitensis biotype 1 (strain ATCC 23456 / CCUG 17765 / NCTC 10094 / 16M)).